The primary structure comprises 461 residues: UDP-N-acetylmuramoylalanine--D-glutamate ligase (461 aa).

ATP is bound at residue 115-121; it reads GSNGKTT.

Belongs to the MurCDEF family.

It localises to the cytoplasm. It carries out the reaction UDP-N-acetyl-alpha-D-muramoyl-L-alanine + D-glutamate + ATP = UDP-N-acetyl-alpha-D-muramoyl-L-alanyl-D-glutamate + ADP + phosphate + H(+). The protein operates within cell wall biogenesis; peptidoglycan biosynthesis. Its function is as follows. Cell wall formation. Catalyzes the addition of glutamate to the nucleotide precursor UDP-N-acetylmuramoyl-L-alanine (UMA). The protein is UDP-N-acetylmuramoylalanine--D-glutamate ligase of Acidobacterium capsulatum (strain ATCC 51196 / DSM 11244 / BCRC 80197 / JCM 7670 / NBRC 15755 / NCIMB 13165 / 161).